Consider the following 377-residue polypeptide: RNA polymerase sigma factor SigA (377 aa).

The disordered stretch occupies residues 72–92 (EVSNLRQGEDHDGNDNDDFNF). Positions 144-214 (LAEANLRLVV…TRAIADQART (71 aa)) are sigma-70 factor domain-2. The Interaction with polymerase core subunit RpoC signature appears at 168–171 (DLIQ). The interval 223-299 (ETINKLIRVS…DQEALTPADA (77 aa)) is sigma-70 factor domain-3. The segment at 312 to 365 (VLDTLTEREENVLRLRFGLDDGRTRTLEEVGKVFGVTRERIRQIEAKALRKLRH) is sigma-70 factor domain-4. The H-T-H motif DNA-binding region spans 338–357 (LEEVGKVFGVTRERIRQIEA).

This sequence belongs to the sigma-70 factor family. RpoD/SigA subfamily. In terms of assembly, interacts transiently with the RNA polymerase catalytic core.

The protein resides in the cytoplasm. In terms of biological role, sigma factors are initiation factors that promote the attachment of RNA polymerase to specific initiation sites and are then released. This sigma factor is the primary sigma factor during exponential growth. The protein is RNA polymerase sigma factor SigA of Bacillus sp.